The following is a 194-amino-acid chain: MSLVPVVVEQTNRGERSYDIYSRLLKDRIVMLSEEVNDVTASLIVAQLLFLEAENPDKDIYFYINSPGGSITAGMAIYDTMQYIKSDVSTICIGMAASMGAFLLAAGEKGKRFALPNSEIMIHQPLGGFQGQATDIGIHADRILRIKKKLNAIISERTGQSIEKVEKDTERDNFMTAEEAKEYGLIDEVFTKKK.

The active-site Nucleophile is Ser-98. Residue His-123 is part of the active site.

This sequence belongs to the peptidase S14 family. In terms of assembly, fourteen ClpP subunits assemble into 2 heptameric rings which stack back to back to give a disk-like structure with a central cavity, resembling the structure of eukaryotic proteasomes.

The protein localises to the cytoplasm. It catalyses the reaction Hydrolysis of proteins to small peptides in the presence of ATP and magnesium. alpha-casein is the usual test substrate. In the absence of ATP, only oligopeptides shorter than five residues are hydrolyzed (such as succinyl-Leu-Tyr-|-NHMec, and Leu-Tyr-Leu-|-Tyr-Trp, in which cleavage of the -Tyr-|-Leu- and -Tyr-|-Trp bonds also occurs).. Functionally, cleaves peptides in various proteins in a process that requires ATP hydrolysis. Has a chymotrypsin-like activity. Plays a major role in the degradation of misfolded proteins. The chain is ATP-dependent Clp protease proteolytic subunit from Clostridium kluyveri (strain NBRC 12016).